A 249-amino-acid polypeptide reads, in one-letter code: Diaminopimelate epimerase (249 aa).

Substrate contacts are provided by Asn11 and Asn60. Cys69 serves as the catalytic Proton donor. Residues 70–71 (GN), Asn164, and 182–183 (ER) each bind substrate. Cys192 acts as the Proton acceptor in catalysis. A substrate-binding site is contributed by 193–194 (GT).

It belongs to the diaminopimelate epimerase family. As to quaternary structure, homodimer.

Its subcellular location is the cytoplasm. The enzyme catalyses (2S,6S)-2,6-diaminopimelate = meso-2,6-diaminopimelate. It participates in amino-acid biosynthesis; L-lysine biosynthesis via DAP pathway; DL-2,6-diaminopimelate from LL-2,6-diaminopimelate: step 1/1. Catalyzes the stereoinversion of LL-2,6-diaminopimelate (L,L-DAP) to meso-diaminopimelate (meso-DAP), a precursor of L-lysine and an essential component of the bacterial peptidoglycan. This Campylobacter lari (strain RM2100 / D67 / ATCC BAA-1060) protein is Diaminopimelate epimerase.